We begin with the raw amino-acid sequence, 103 residues long: ATP-dependent Clp protease adapter protein ClpS (103 aa).

The protein belongs to the ClpS family. As to quaternary structure, binds to the N-terminal domain of the chaperone ClpA.

In terms of biological role, involved in the modulation of the specificity of the ClpAP-mediated ATP-dependent protein degradation. This is ATP-dependent Clp protease adapter protein ClpS from Nitrosomonas eutropha (strain DSM 101675 / C91 / Nm57).